The primary structure comprises 269 residues: Regulatory protein RecX (269 aa).

The protein belongs to the RecX family.

Its subcellular location is the cytoplasm. Its function is as follows. Modulates RecA activity. The protein is Regulatory protein RecX of Geobacillus thermodenitrificans (strain NG80-2).